Consider the following 350-residue polypeptide: ATPase GET3 (350 aa).

26-33 (KGGVGKTT) is a binding site for ATP. Asp-57 is a catalytic residue. Positions 243 and 270 each coordinate ATP. Positions 282 and 285 each coordinate Zn(2+).

It belongs to the arsA ATPase family. As to quaternary structure, homodimer. Component of the Golgi to ER traffic (GET) complex, which is composed of GET1, GET2 and GET3. Within the complex, GET1 and GET2 form a heterotetramer which is stabilized by phosphatidylinositol binding and which binds to the GET3 homodimer. Interacts with the chloride channel protein GEF1.

The protein resides in the cytoplasm. Its subcellular location is the endoplasmic reticulum. The protein localises to the golgi apparatus. ATPase required for the post-translational delivery of tail-anchored (TA) proteins to the endoplasmic reticulum. Recognizes and selectively binds the transmembrane domain of TA proteins in the cytosol. This complex then targets to the endoplasmic reticulum by membrane-bound receptors GET1 and GET2, where the tail-anchored protein is released for insertion. This process is regulated by ATP binding and hydrolysis. ATP binding drives the homodimer towards the closed dimer state, facilitating recognition of newly synthesized TA membrane proteins. ATP hydrolysis is required for insertion. Subsequently, the homodimer reverts towards the open dimer state, lowering its affinity for the GET1-GET2 receptor, and returning it to the cytosol to initiate a new round of targeting. Cooperates with the HDEL receptor ERD2 to mediate the ATP-dependent retrieval of resident ER proteins that contain a C-terminal H-D-E-L retention signal from the Golgi to the ER. Involved in low-level resistance to the oxyanions arsenite and arsenate, and in heat tolerance. This is ATPase GET3 from Candida albicans (strain SC5314 / ATCC MYA-2876) (Yeast).